A 1087-amino-acid polypeptide reads, in one-letter code: Error-prone DNA polymerase 2 (1087 aa).

Positions Asp1033–Val1064 are disordered.

The protein belongs to the DNA polymerase type-C family. DnaE2 subfamily.

The protein localises to the cytoplasm. The catalysed reaction is DNA(n) + a 2'-deoxyribonucleoside 5'-triphosphate = DNA(n+1) + diphosphate. In terms of biological role, DNA polymerase involved in damage-induced mutagenesis and translesion synthesis (TLS). It is not the major replicative DNA polymerase. The polypeptide is Error-prone DNA polymerase 2 (Rhizobium meliloti (strain 1021) (Ensifer meliloti)).